The chain runs to 273 residues: Ribosomal RNA small subunit methyltransferase A (273 aa).

6 residues coordinate S-adenosyl-L-methionine: Asn18, Leu20, Gly45, Glu66, Asp91, and Asn113.

This sequence belongs to the class I-like SAM-binding methyltransferase superfamily. rRNA adenine N(6)-methyltransferase family. RsmA subfamily.

Its subcellular location is the cytoplasm. The enzyme catalyses adenosine(1518)/adenosine(1519) in 16S rRNA + 4 S-adenosyl-L-methionine = N(6)-dimethyladenosine(1518)/N(6)-dimethyladenosine(1519) in 16S rRNA + 4 S-adenosyl-L-homocysteine + 4 H(+). Specifically dimethylates two adjacent adenosines (A1518 and A1519) in the loop of a conserved hairpin near the 3'-end of 16S rRNA in the 30S particle. May play a critical role in biogenesis of 30S subunits. The sequence is that of Ribosomal RNA small subunit methyltransferase A from Salmonella newport (strain SL254).